The chain runs to 265 residues: Indole-3-glycerol phosphate synthase (265 aa).

Belongs to the TrpC family.

The catalysed reaction is 1-(2-carboxyphenylamino)-1-deoxy-D-ribulose 5-phosphate + H(+) = (1S,2R)-1-C-(indol-3-yl)glycerol 3-phosphate + CO2 + H2O. Its pathway is amino-acid biosynthesis; L-tryptophan biosynthesis; L-tryptophan from chorismate: step 4/5. The polypeptide is Indole-3-glycerol phosphate synthase (Xanthomonas oryzae pv. oryzae (strain MAFF 311018)).